A 348-amino-acid polypeptide reads, in one-letter code: Protein arginine N-methyltransferase 1 (348 aa).

The SAM-dependent MTase PRMT-type domain occupies 24–342 (KDYYFDSYAH…KGEVCDLNEQ (319 aa)). The S-adenosyl-L-methionine site is built by His37, Arg46, Gly70, Glu92, and Glu121. Catalysis depends on residues Glu139 and Glu148.

It belongs to the class I-like SAM-binding methyltransferase superfamily. Protein arginine N-methyltransferase family. In terms of assembly, interacts with daf-16. Interacts with pgl-1 and pgl-3. Interacts with alg-1. Widely expressed in pharyngeal, body wall muscle, intestinal and vulval cells.

The protein localises to the cytoplasm. It localises to the nucleus. It carries out the reaction L-arginyl-[protein] + 2 S-adenosyl-L-methionine = N(omega),N(omega)-dimethyl-L-arginyl-[protein] + 2 S-adenosyl-L-homocysteine + 2 H(+). It catalyses the reaction L-arginyl-[protein] + S-adenosyl-L-methionine = N(omega)-methyl-L-arginyl-[protein] + S-adenosyl-L-homocysteine + H(+). Arginine methyltransferase that methylates (mono and asymmetric dimethylation) the guanidino nitrogens of arginyl residues present in target proteins. Catalyzes the formation of monomethylarginine and asymmetric dimethylarginine on histones H2A and H4, a specific tag for epigenetic transcriptional activation. Catalyzes asymmetric arginine dimethylation of mitochondrial proteins necessary for mitochondrial oxidative phosphorylation activity and thus aerobic respiration and ATP synthesis, and the mitochondrial stress response. Methylates arginine residues in P-granule components pgl-1 and pgl-3 to promote P-granule degradation by autophagy in somatic cells to ensure exclusive localization of the P-granules in germ cells. Modulates the interaction of P-granule proteins epg-2 and sepa-1. Methylates arginine residues in daf-16, which blocks ftt-2 binding to daf-16, prevents akt-mediated phosphorylation and allows for daf-16 to translocate to the nucleus. In turn, association with daf-16 therefore allows for the transcriptional activation of daf-16 and regulation of longevity-related genes. Maintains lifespan by modulating daf-16 activity downstream of the daf-2 signaling pathway. Plays a role in heat and oxidative stress resistance. Role in stress resistance and also fat storage may be in association with the daf-2 signaling pathway. Required for normal feeding behavior. This chain is Protein arginine N-methyltransferase 1, found in Caenorhabditis elegans.